Reading from the N-terminus, the 153-residue chain is Large ribosomal subunit protein bL9 (153 aa).

This sequence belongs to the bacterial ribosomal protein bL9 family.

Functionally, binds to the 23S rRNA. This is Large ribosomal subunit protein bL9 from Micrococcus luteus (strain ATCC 4698 / DSM 20030 / JCM 1464 / CCM 169 / CCUG 5858 / IAM 1056 / NBRC 3333 / NCIMB 9278 / NCTC 2665 / VKM Ac-2230) (Micrococcus lysodeikticus).